Here is a 230-residue protein sequence, read N- to C-terminus: Urease accessory protein UreE (230 aa).

Composition is skewed to basic and acidic residues over residues 182 to 193 and 204 to 230; these read HVHVDSPLDEPH and SHGDGHSHSHSHDHDHDHRHDDHDHKH. The disordered stretch occupies residues 182–230; that stretch reads HVHVDSPLDEPHGSGLHVHAIHSHGDGHSHSHSHDHDHDHRHDDHDHKH.

It belongs to the UreE family.

The protein localises to the cytoplasm. Involved in urease metallocenter assembly. Binds nickel. Probably functions as a nickel donor during metallocenter assembly. This Yersinia mollaretii protein is Urease accessory protein UreE.